We begin with the raw amino-acid sequence, 583 residues long: cAMP-dependent protein kinase catalytic subunit 3 (583 aa).

Disordered regions lie at residues 51 to 75 (ATPT…TIGK) and 98 to 264 (SGTA…QTAK). Polar residues-rich tracts occupy residues 52 to 69 (TPTQ…TGTP) and 98 to 107 (SGTAGSTSKL). Over residues 108–162 (TTGNGSGNTMTSAYKIPSNNSTTANDSSNTETTFTFKLGRSNGRSSSNVASSESS) the composition is skewed to low complexity. The segment covering 163 to 176 (DPLESDYSEEDPEQ) has biased composition (acidic residues). Residues 181–200 (PDPATNSRSSSTATTTTTSS) are compositionally biased toward low complexity. The span at 205 to 219 (NDVDEEDEEDDENEG) shows a compositional bias: acidic residues. Positions 221–234 (GNGRDADDATHDSS) are enriched in basic and acidic residues. Residues 235-256 (ESIEEDDGNETDDEEDDDESEE) show a composition bias toward acidic residues. Residues 274–528 (YQIIKTVGTG…ADDVKRHRWF (255 aa)) enclose the Protein kinase domain. ATP-binding positions include 280–288 (VGTGTFGRV) and Lys-303. The active-site Proton acceptor is the Asp-397. The AGC-kinase C-terminal domain maps to 529-583 (KHLNWNDVYSKKLKPPILPDVHHDGDTKNFDDYPEKDWKPAKAVDQRDLQYFNDF).

Belongs to the protein kinase superfamily. AGC Ser/Thr protein kinase family. cAMP subfamily. In terms of tissue distribution, expressed in embryonic mesoderm, and the optic lamina, wing disk and leg disks of third instar larvae. More abundant in adult head than adult body.

It carries out the reaction L-seryl-[protein] + ATP = O-phospho-L-seryl-[protein] + ADP + H(+). The enzyme catalyses L-threonyl-[protein] + ATP = O-phospho-L-threonyl-[protein] + ADP + H(+). Functionally, does not have an essential role in development. The chain is cAMP-dependent protein kinase catalytic subunit 3 (Pka-C3) from Drosophila melanogaster (Fruit fly).